Here is a 284-residue protein sequence, read N- to C-terminus: 4-diphosphocytidyl-2-C-methyl-D-erythritol kinase (284 aa).

Residue Lys14 is part of the active site. Residue 98-108 (PMGGGLGGGSS) participates in ATP binding. Asp140 is an active-site residue.

This sequence belongs to the GHMP kinase family. IspE subfamily.

The catalysed reaction is 4-CDP-2-C-methyl-D-erythritol + ATP = 4-CDP-2-C-methyl-D-erythritol 2-phosphate + ADP + H(+). It participates in isoprenoid biosynthesis; isopentenyl diphosphate biosynthesis via DXP pathway; isopentenyl diphosphate from 1-deoxy-D-xylulose 5-phosphate: step 3/6. In terms of biological role, catalyzes the phosphorylation of the position 2 hydroxy group of 4-diphosphocytidyl-2C-methyl-D-erythritol. The polypeptide is 4-diphosphocytidyl-2-C-methyl-D-erythritol kinase (Shewanella denitrificans (strain OS217 / ATCC BAA-1090 / DSM 15013)).